The primary structure comprises 397 residues: Methylthioribose kinase (397 aa).

ATP contacts are provided by residues N44, K61, and 115–117 (EDL). D233 lines the substrate pocket. 250–252 (DPE) serves as a coordination point for ATP. R340 provides a ligand contact to substrate.

The protein belongs to the methylthioribose kinase family. As to quaternary structure, homodimer.

It carries out the reaction 5-(methylsulfanyl)-D-ribose + ATP = 5-(methylsulfanyl)-alpha-D-ribose 1-phosphate + ADP + H(+). The protein operates within amino-acid biosynthesis; L-methionine biosynthesis via salvage pathway; S-methyl-5-thio-alpha-D-ribose 1-phosphate from S-methyl-5'-thioadenosine (hydrolase route): step 2/2. Catalyzes the phosphorylation of methylthioribose into methylthioribose-1-phosphate. In Bacillus subtilis (strain 168), this protein is Methylthioribose kinase (mtnK).